The sequence spans 349 residues: Phosphoribosylformylglycinamidine cyclo-ligase (349 aa).

It belongs to the AIR synthase family.

It localises to the cytoplasm. The catalysed reaction is 2-formamido-N(1)-(5-O-phospho-beta-D-ribosyl)acetamidine + ATP = 5-amino-1-(5-phospho-beta-D-ribosyl)imidazole + ADP + phosphate + H(+). The protein operates within purine metabolism; IMP biosynthesis via de novo pathway; 5-amino-1-(5-phospho-D-ribosyl)imidazole from N(2)-formyl-N(1)-(5-phospho-D-ribosyl)glycinamide: step 2/2. This is Phosphoribosylformylglycinamidine cyclo-ligase from Psychrobacter arcticus (strain DSM 17307 / VKM B-2377 / 273-4).